Reading from the N-terminus, the 475-residue chain is Ankyrin repeat, SAM and basic leucine zipper domain-containing protein 1 (475 aa).

The span at M1–A10 shows a compositional bias: low complexity. Residues M1 to G24 form a disordered region. 3 positions are modified to phosphoserine: S17, S18, and S20. ANK repeat units follow at residues E45–S74, Y78–F107, D110–V144, R148–T177, S181–L210, and D214–G243. The SAM domain occupies S272–D334.

Interacts with DDX4, PIWIL1, RANBP9 and TDRD1.

The protein resides in the cytoplasm. In terms of biological role, plays a central role during spermatogenesis by repressing transposable elements and preventing their mobilization, which is essential for the germline integrity. Acts via the piRNA metabolic process, which mediates the repression of transposable elements during meiosis by forming complexes composed of piRNAs and Piwi proteins and governs the methylation and subsequent repression of transposons. Its association with pi-bodies suggests a participation in the primary piRNAs metabolic process. Required prior to the pachytene stage to facilitate the production of multiple types of piRNAs, including those associated with repeats involved in the regulation of retrotransposons. May act by mediating protein-protein interactions during germ cell maturation. The sequence is that of Ankyrin repeat, SAM and basic leucine zipper domain-containing protein 1 (ASZ1) from Carollia perspicillata (Seba's short-tailed bat).